The following is a 614-amino-acid chain: Elongation factor 4 (614 aa).

A tr-type G domain is found at 10 to 192 (ALIRNFCIIA…EIVARIPPPV (183 aa)). Residues 22-27 (DHGKST) and 139-142 (NKID) each bind GTP.

The protein belongs to the TRAFAC class translation factor GTPase superfamily. Classic translation factor GTPase family. LepA subfamily.

The protein localises to the cell membrane. It catalyses the reaction GTP + H2O = GDP + phosphate + H(+). Required for accurate and efficient protein synthesis under certain stress conditions. May act as a fidelity factor of the translation reaction, by catalyzing a one-codon backward translocation of tRNAs on improperly translocated ribosomes. Back-translocation proceeds from a post-translocation (POST) complex to a pre-translocation (PRE) complex, thus giving elongation factor G a second chance to translocate the tRNAs correctly. Binds to ribosomes in a GTP-dependent manner. This chain is Elongation factor 4, found in Thermobifida fusca (strain YX).